Here is a 518-residue protein sequence, read N- to C-terminus: Protein FAM98A (518 aa).

Disordered regions lie at residues 297 to 415 (VLMG…GHSS) and 434 to 518 (GSGY…HYTS). Positions 302-311 (VPDRGGRPNE) are enriched in basic and acidic residues. Composition is skewed to gly residues over residues 349 to 364 (GGRG…GGRG), 383 to 396 (WTDG…GYQD), and 405 to 415 (QPGGYHGGHSS). The segment covering 447-459 (RYQDGGHHGDRGG) has biased composition (basic and acidic residues). The segment covering 460 to 484 (GRGGRGGRGGRGGRAGQGGGWGGRG) has biased composition (gly residues). Positions 488-504 (YHQGGQFEQHFQHGGYQ) are enriched in low complexity. Over residues 505–518 (YNHSGFGQGRHYTS) the composition is skewed to polar residues.

The protein belongs to the FAM98 family. Interacts (via N- and C-terminus) with DDX1. Interacts (via N- and C-terminus) with C14orf166. Interacts with FAM98B. Interacts with PLEKHM1 (via N- and C-terminus). In terms of tissue distribution, expressed strongly in colorectal cancer cells. Expressed strongly in colorectal cancer tissues compared to wild-type colon samples (at protein level). Expressed strongly in colorectal cancer tissues compared to wild-type colon samples.

Positively stimulates PRMT1-induced protein arginine methylation. Involved in skeletal homeostasis. Positively regulates lysosome peripheral distribution and ruffled border formation in osteoclasts. This Homo sapiens (Human) protein is Protein FAM98A.